The sequence spans 204 residues: ATP-dependent Clp protease proteolytic subunit (204 aa).

S102 acts as the Nucleophile in catalysis. Residue H127 is part of the active site.

It belongs to the peptidase S14 family. In terms of assembly, fourteen ClpP subunits assemble into 2 heptameric rings which stack back to back to give a disk-like structure with a central cavity, resembling the structure of eukaryotic proteasomes.

The protein resides in the cytoplasm. The enzyme catalyses Hydrolysis of proteins to small peptides in the presence of ATP and magnesium. alpha-casein is the usual test substrate. In the absence of ATP, only oligopeptides shorter than five residues are hydrolyzed (such as succinyl-Leu-Tyr-|-NHMec, and Leu-Tyr-Leu-|-Tyr-Trp, in which cleavage of the -Tyr-|-Leu- and -Tyr-|-Trp bonds also occurs).. Its function is as follows. Cleaves peptides in various proteins in a process that requires ATP hydrolysis. Has a chymotrypsin-like activity. Plays a major role in the degradation of misfolded proteins. This is ATP-dependent Clp protease proteolytic subunit from Neisseria meningitidis serogroup A / serotype 4A (strain DSM 15465 / Z2491).